The sequence spans 206 residues: Ectodysplasin-A receptor-associated adapter protein (206 aa).

Disordered stretches follow at residues 1-36 (MRPL…DKYP) and 52-77 (TLNC…TGDP). 2 stretches are compositionally biased toward polar residues: residues 24-33 (PSTLSFNTSD) and 52-62 (TLNCPPNSDMK). The Death domain maps to 114–190 (DVIRIKLDPC…DVEKVLRRWV (77 aa)).

Self-associates and binds to EDAR, TRAF1, TRAF2 and TRAF3.

Its subcellular location is the cytoplasm. Adapter protein that interacts with EDAR DEATH domain and couples the receptor to EDA signaling pathway during morphogenesis of ectodermal organs. Mediates the activation of NF-kappa-B. In Macaca fascicularis (Crab-eating macaque), this protein is Ectodysplasin-A receptor-associated adapter protein (EDARADD).